The chain runs to 492 residues: MNERGMLVDPRFDAFFKLEQIDDYKYDGADTSPSTSNGLPETSNGGRLICDVCGDVAFGKHYGINACNGCKGFFRRSVWSRRQYSCRFGGDCPVVKEHRNVCRSCRLKKCFEVGMNPDSVQNERDRNAKNGGMGGPMSSPTQSSLCKELTISNGQIKRKRLRPETVEKTTQTDGKLEINDDFDFENMQQNPTPPGLLPLKIERISTPPSDLPVPMDFSIHSAVLDIEQKVFYNCPVAVDNSINATKTPITLPFEVVFRQPHLVCNRYPMRFSNTRVLTPEDLIDGWRRHFTYYSDWCHAMDEFKALSPEDQIVLAKKKIILHGWLVHAYYSYKSGCNGICFANGAAHLPEGGHPSITEFYKECMPRYLNYVIYPMHNFQMDDAEMVLIKCIMFFSSESGLSAAGRQIVSAAREKYLSALYNYGRANKCTTSAQATLRIAKFMIMLSAITSLTHLMNEGVHVTSLFNIIEFDELIQATHKTTPPQHSPPAPMG.

A DNA-binding region (nuclear receptor) is located at residues 47-122; the sequence is RLICDVCGDV…VGMNPDSVQN (76 aa). 2 consecutive NR C4-type zinc fingers follow at residues 50-70 and 86-110; these read CDVC…CNGC and CRFG…LKKC. Positions 121–143 are disordered; that stretch reads QNERDRNAKNGGMGGPMSSPTQS. The 267-residue stretch at 215-481 folds into the NR LBD domain; that stretch reads MDFSIHSAVL…ELIQATHKTT (267 aa).

This sequence belongs to the nuclear hormone receptor family.

The protein localises to the nucleus. Orphan nuclear receptor. The polypeptide is Nuclear hormone receptor family member nhr-4 (nhr-4) (Caenorhabditis elegans).